The chain runs to 115 residues: UPF0738 protein SERP0585 (115 aa).

This sequence belongs to the UPF0738 family.

The chain is UPF0738 protein SERP0585 from Staphylococcus epidermidis (strain ATCC 35984 / DSM 28319 / BCRC 17069 / CCUG 31568 / BM 3577 / RP62A).